Here is a 394-residue protein sequence, read N- to C-terminus: uncharacterized protein (394 aa).

Phosphoserine occurs at positions 117 and 121. 3 disordered regions span residues 177–295 (DSDE…PGTF), 315–347 (KRSI…GSLS), and 370–394 (SSEV…AHRV). A compositionally biased stretch (acidic residues) spans 178–190 (SDEEDEVDDEEIE). 2 stretches are compositionally biased toward polar residues: residues 191-207 (SFNS…NSRY) and 216-230 (EKQS…VSQI). 2 stretches are compositionally biased toward acidic residues: residues 231 to 263 (SDDE…DDED) and 284 to 295 (IPDDTDFVPGTF). The span at 370–379 (SSEVLRNSKS) shows a compositional bias: polar residues. Serine 379 carries the phosphoserine modification.

It localises to the nucleus. This is an uncharacterized protein from Schizosaccharomyces pombe (strain 972 / ATCC 24843) (Fission yeast).